The following is a 434-amino-acid chain: Protein ENHANCED PSEUDOMONAS SUSCEPTIBILITY 1 (434 aa).

The Proton acceptor role is filled by Asp376.

This sequence belongs to the plant acyltransferase family.

Functionally, required for pathogen-induced salicylic acid (SA) accumulation and SA-mediated resistance to virulent and avirulent pathogens (e.g. P.syringae). The protein is Protein ENHANCED PSEUDOMONAS SUSCEPTIBILITY 1 of Arabidopsis thaliana (Mouse-ear cress).